The sequence spans 458 residues: Light-independent protochlorophyllide reductase subunit N (458 aa).

Residues C20, C45, and C105 each coordinate [4Fe-4S] cluster.

It belongs to the BchN/ChlN family. In terms of assembly, protochlorophyllide reductase is composed of three subunits; ChlL, ChlN and ChlB. Forms a heterotetramer of two ChlB and two ChlN subunits. Requires [4Fe-4S] cluster as cofactor.

The protein localises to the plastid. It is found in the chloroplast. It carries out the reaction chlorophyllide a + oxidized 2[4Fe-4S]-[ferredoxin] + 2 ADP + 2 phosphate = protochlorophyllide a + reduced 2[4Fe-4S]-[ferredoxin] + 2 ATP + 2 H2O. The protein operates within porphyrin-containing compound metabolism; chlorophyll biosynthesis (light-independent). Functionally, component of the dark-operative protochlorophyllide reductase (DPOR) that uses Mg-ATP and reduced ferredoxin to reduce ring D of protochlorophyllide (Pchlide) to form chlorophyllide a (Chlide). This reaction is light-independent. The NB-protein (ChlN-ChlB) is the catalytic component of the complex. In Angiopteris evecta (Mule's foot fern), this protein is Light-independent protochlorophyllide reductase subunit N.